A 326-amino-acid polypeptide reads, in one-letter code: Phosphotriesterase homology protein (326 aa).

Residues H22, H24, K145, H178, H207, and D264 each coordinate Zn(2+). K145 bears the N6-carboxylysine mark.

This sequence belongs to the metallo-dependent hydrolases superfamily. Phosphotriesterase family. The cofactor is Zn(2+).

The polypeptide is Phosphotriesterase homology protein (php) (Mycobacterium tuberculosis (strain CDC 1551 / Oshkosh)).